We begin with the raw amino-acid sequence, 129 residues long: Small ribosomal subunit protein uS11 (129 aa).

The protein belongs to the universal ribosomal protein uS11 family. In terms of assembly, part of the 30S ribosomal subunit. Interacts with proteins S7 and S18. Binds to IF-3.

Located on the platform of the 30S subunit, it bridges several disparate RNA helices of the 16S rRNA. Forms part of the Shine-Dalgarno cleft in the 70S ribosome. In Enterobacter sp. (strain 638), this protein is Small ribosomal subunit protein uS11.